The primary structure comprises 217 residues: Probable GTP-binding protein EngB (217 aa).

The EngB-type G domain maps to 27–201 (TGIEVAFAGR…RDKLDTWFSE (175 aa)). GTP contacts are provided by residues 35 to 42 (GRSNAGKS), 62 to 66 (GRTQL), 80 to 83 (DLPG), 147 to 150 (TKAD), and 180 to 182 (FSS). Mg(2+) contacts are provided by Ser42 and Thr64.

The protein belongs to the TRAFAC class TrmE-Era-EngA-EngB-Septin-like GTPase superfamily. EngB GTPase family. It depends on Mg(2+) as a cofactor.

Necessary for normal cell division and for the maintenance of normal septation. This Edwardsiella ictaluri (strain 93-146) protein is Probable GTP-binding protein EngB.